Here is a 434-residue protein sequence, read N- to C-terminus: Alpha-enolase (434 aa).

Serine 40 contributes to the Mg(2+) binding site. Residues histidine 158 and glutamate 167 each contribute to the substrate site. Glutamate 210 (proton donor) is an active-site residue. Mg(2+) contacts are provided by aspartate 245, glutamate 293, and aspartate 318. Residues glutamate 293, aspartate 318, 370 to 373 (SHRS), and lysine 394 each bind substrate.

The protein belongs to the enolase family. In terms of assembly, homodimer. Mg(2+) serves as cofactor.

Its subcellular location is the cytoplasm. It carries out the reaction (2R)-2-phosphoglycerate = phosphoenolpyruvate + H2O. It functions in the pathway carbohydrate degradation; glycolysis; pyruvate from D-glyceraldehyde 3-phosphate: step 4/5. This is Alpha-enolase from Trachemys scripta elegans (Red-eared slider turtle).